The chain runs to 150 residues: Peptide deformylase (150 aa).

Residues Cys-88 and His-130 each coordinate Fe cation. Glu-131 is an active-site residue. His-134 contacts Fe cation.

It belongs to the polypeptide deformylase family. The cofactor is Fe(2+).

The enzyme catalyses N-terminal N-formyl-L-methionyl-[peptide] + H2O = N-terminal L-methionyl-[peptide] + formate. In terms of biological role, removes the formyl group from the N-terminal Met of newly synthesized proteins. Requires at least a dipeptide for an efficient rate of reaction. N-terminal L-methionine is a prerequisite for activity but the enzyme has broad specificity at other positions. The polypeptide is Peptide deformylase (Desulfitobacterium hafniense (strain Y51)).